The following is a 341-amino-acid chain: Glyceraldehyde-3-phosphate dehydrogenase 2 (341 aa).

NAD(+) is bound by residues 12–13, R78, and T120; that span reads RI. D-glyceraldehyde 3-phosphate-binding positions include 152–154 and T183; that span reads SCT. Catalysis depends on C153, which acts as the Nucleophile. N184 contributes to the NAD(+) binding site. D-glyceraldehyde 3-phosphate is bound by residues R198, 211–212, and R234; that span reads TG. N313 provides a ligand contact to NAD(+).

The protein belongs to the glyceraldehyde-3-phosphate dehydrogenase family. In terms of assembly, homotetramer.

It localises to the cytoplasm. The catalysed reaction is D-glyceraldehyde 3-phosphate + phosphate + NAD(+) = (2R)-3-phospho-glyceroyl phosphate + NADH + H(+). The protein operates within carbohydrate degradation; glycolysis; pyruvate from D-glyceraldehyde 3-phosphate: step 1/5. Catalyzes the oxidative phosphorylation of glyceraldehyde 3-phosphate (G3P) to 1,3-bisphosphoglycerate (BPG) using the cofactor NAD. The first reaction step involves the formation of a hemiacetal intermediate between G3P and a cysteine residue, and this hemiacetal intermediate is then oxidized to a thioester, with concomitant reduction of NAD to NADH. The reduced NADH is then exchanged with the second NAD, and the thioester is attacked by a nucleophilic inorganic phosphate to produce BPG. The protein is Glyceraldehyde-3-phosphate dehydrogenase 2 (gapA2) of Staphylococcus epidermidis (strain ATCC 12228 / FDA PCI 1200).